The chain runs to 457 residues: Heme sensor protein HssS (457 aa).

A run of 2 helical transmembrane segments spans residues 9–29 (IAIYSITVILFSALISFVLTN) and 164–184 (TFLAVLLMLLLFISISLVIAS). The HAMP domain occupies 186 to 238 (YSIIRPVKKLKLATERLIDGDFETPIKQTRKDEIGTLQYHFNKMRESLGQVDQ). One can recognise a Histidine kinase domain in the interval 246 to 456 (NVSHEIKTPL…TFTITLPNNS (211 aa)). His249 bears the Phosphohistidine; by autocatalysis mark.

In terms of processing, autophosphorylated.

The protein localises to the cell membrane. The catalysed reaction is ATP + protein L-histidine = ADP + protein N-phospho-L-histidine.. Functionally, member of the two-component regulatory system HssS/HssR involved in intracellular heme homeostasis and tempering of staphylococcal virulence. HssS functions as a heme sensor histidine kinase which is autophosphorylated at a histidine residue and transfers its phosphate group to an aspartate residue of HssR. HssR/HssS activates the expression of hrtAB, an efflux pump, in response to extracellular heme, hemin, hemoglobin or blood. The chain is Heme sensor protein HssS (hssS) from Staphylococcus aureus (strain Mu3 / ATCC 700698).